The primary structure comprises 107 residues: Sperm-specific class P protein 32 (107 aa).

Residues 1–20 (MLTIEPPSATFPASGGSSTH) form a disordered region. One can recognise an MSP domain in the interval 1–107 (MLTIEPPSAT…GDVTILLKTN (107 aa)).

As to expression, expressed at higher level in testis.

The protein is Sperm-specific class P protein 32 (ssp-32) of Caenorhabditis elegans.